Reading from the N-terminus, the 668-residue chain is Protein IQ-DOMAIN 14 (668 aa).

The segment at methionine 1–isoleucine 11 is calmodulin-binding. Disordered stretches follow at residues threonine 16–isoleucine 54 and glycine 66–valine 305. Residues histidine 18 to serine 31 show a composition bias toward basic and acidic residues. Basic residues predominate over residues glycine 32 to leucine 43. The span at proline 78 to alanine 96 shows a compositional bias: pro residues. 2 stretches are compositionally biased toward low complexity: residues serine 97–alanine 120 and proline 166–proline 175. Pro residues predominate over residues proline 269 to serine 279. 2 consecutive IQ domains span residues glutamine 321–leucine 350 and alanine 343–glutamine 372. Disordered regions lie at residues alanine 399–alanine 431 and serine 476–serine 561. Residues valine 415–alanine 431 show a composition bias toward basic and acidic residues. Residues aspartate 516–threonine 529 are compositionally biased toward polar residues.

It belongs to the IQD family. Binds to multiple calmodulin (CaM) in the presence of Ca(2+) and CaM-like proteins. As to expression, expressed in hypocotyls, cotyledons, leaves and petioles.

The protein resides in the cell membrane. It is found in the cytoplasm. Its subcellular location is the cytoskeleton. Its function is as follows. May be involved in cooperative interactions with calmodulins or calmodulin-like proteins. Recruits calmodulin proteins to microtubules, thus being a potential scaffold in cellular signaling and trafficking. Regulates cell and organ shapes (prevents twisting) in aerial parts probably by regulating transverse microtubules (MT) arrays alignment. Regulates the formation of oval xylem secondary cell-wall deposition pits through microtubule-dependent lateral inhibition of Rho GTPase domains, thus confining the area of active ROP domains within the lattice of the cortical microtubules. May associate with nucleic acids and regulate gene expression at the transcriptional or post-transcriptional level. The polypeptide is Protein IQ-DOMAIN 14 (Arabidopsis thaliana (Mouse-ear cress)).